A 349-amino-acid chain; its full sequence is Phosphoribosylformylglycinamidine cyclo-ligase (349 aa).

It belongs to the AIR synthase family.

It is found in the cytoplasm. It carries out the reaction 2-formamido-N(1)-(5-O-phospho-beta-D-ribosyl)acetamidine + ATP = 5-amino-1-(5-phospho-beta-D-ribosyl)imidazole + ADP + phosphate + H(+). Its pathway is purine metabolism; IMP biosynthesis via de novo pathway; 5-amino-1-(5-phospho-D-ribosyl)imidazole from N(2)-formyl-N(1)-(5-phospho-D-ribosyl)glycinamide: step 2/2. The sequence is that of Phosphoribosylformylglycinamidine cyclo-ligase from Bordetella parapertussis (strain 12822 / ATCC BAA-587 / NCTC 13253).